We begin with the raw amino-acid sequence, 235 residues long: Glycerol-3-phosphate acyltransferase (235 aa).

A run of 6 helical transmembrane segments spans residues 4–24 (LLAILAVSYIIGSIPTSLVAG), 56–76 (VVTLIDIVKGVVAAVSVVAFF), 94–114 (LLAGMSAVIGHVFTLFAGFKG), 122–142 (AGMLIGIAPVSMLMVVGIFLL), 152–172 (VASMLAAIAFPLIIAIRKYIF), and 191–211 (FHDSLDYHLMIFGLIVALAIL).

Belongs to the PlsY family. As to quaternary structure, probably interacts with PlsX.

The protein resides in the cell inner membrane. It catalyses the reaction an acyl phosphate + sn-glycerol 3-phosphate = a 1-acyl-sn-glycero-3-phosphate + phosphate. The protein operates within lipid metabolism; phospholipid metabolism. Catalyzes the transfer of an acyl group from acyl-phosphate (acyl-PO(4)) to glycerol-3-phosphate (G3P) to form lysophosphatidic acid (LPA). This enzyme utilizes acyl-phosphate as fatty acyl donor, but not acyl-CoA or acyl-ACP. This Pelodictyon phaeoclathratiforme (strain DSM 5477 / BU-1) protein is Glycerol-3-phosphate acyltransferase.